A 346-amino-acid polypeptide reads, in one-letter code: Phosphoribosylformylglycinamidine cyclo-ligase (346 aa).

It belongs to the AIR synthase family.

It localises to the cytoplasm. The enzyme catalyses 2-formamido-N(1)-(5-O-phospho-beta-D-ribosyl)acetamidine + ATP = 5-amino-1-(5-phospho-beta-D-ribosyl)imidazole + ADP + phosphate + H(+). It participates in purine metabolism; IMP biosynthesis via de novo pathway; 5-amino-1-(5-phospho-D-ribosyl)imidazole from N(2)-formyl-N(1)-(5-phospho-D-ribosyl)glycinamide: step 2/2. In Erwinia tasmaniensis (strain DSM 17950 / CFBP 7177 / CIP 109463 / NCPPB 4357 / Et1/99), this protein is Phosphoribosylformylglycinamidine cyclo-ligase.